Reading from the N-terminus, the 135-residue chain is Snaclec rhodocetin subunit gamma (135 aa).

3 cysteine pairs are disulfide-bonded: cysteine 4-cysteine 15, cysteine 32-cysteine 129, and cysteine 104-cysteine 121. Residues 11–130 (YDQHCYQAFN…CQAKNPFVCK (120 aa)) enclose the C-type lectin domain.

Belongs to the snaclec family. As to quaternary structure, heterotetramer of subunit alpha, beta, gamma and delta; only the gamma and the delta subunits are disulfide-linked. Alpha-beta heterodimer and gamma-delta heterodimer associate orthogonally, giving a cruciform conformation. This heterotetramer may covalently dimerizes thanks to the gamma subunit. As to expression, expressed by the venom gland.

It localises to the secreted. Its function is as follows. Potent inhibitor of collagen-induced platelet aggregation. It acts by binding to the integrin alpha2A domain and blocks collagen binding to integrin alpha-2/beta-1 (ITGA2/ITGB1). The gamma/delta subunits mainly contribute to this activity. The polypeptide is Snaclec rhodocetin subunit gamma (Calloselasma rhodostoma (Malayan pit viper)).